Here is a 336-residue protein sequence, read N- to C-terminus: GTPase Obg (336 aa).

An Obg domain is found at 1-159; the sequence is MKFVDEATLI…KTLKLELKLL (159 aa). The OBG-type G domain occupies 160 to 329; the sequence is ADVGLVGLPN…LIEAIFAQLR (170 aa). Residues 166–173, 191–195, 213–216, 283–286, and 310–312 each bind GTP; these read GLPNAGKS, FTTLA, DIPG, NKMD, and SAI. Residues Ser-173 and Thr-193 each coordinate Mg(2+).

The protein belongs to the TRAFAC class OBG-HflX-like GTPase superfamily. OBG GTPase family. As to quaternary structure, monomer. Mg(2+) is required as a cofactor.

It is found in the cytoplasm. Its function is as follows. An essential GTPase which binds GTP, GDP and possibly (p)ppGpp with moderate affinity, with high nucleotide exchange rates and a fairly low GTP hydrolysis rate. Plays a role in control of the cell cycle, stress response, ribosome biogenesis and in those bacteria that undergo differentiation, in morphogenesis control. The chain is GTPase Obg from Desulfatibacillum aliphaticivorans.